Here is a 199-residue protein sequence, read N- to C-terminus: Recombination protein RecR (199 aa).

The C4-type zinc-finger motif lies at 58 to 73; sequence CRTCFSLSDQPECRIC. In terms of domain architecture, Toprim spans 81–176; that stretch reads SIICVVEKPT…NVTRIASGVP (96 aa).

This sequence belongs to the RecR family.

In terms of biological role, may play a role in DNA repair. It seems to be involved in an RecBC-independent recombinational process of DNA repair. It may act with RecF and RecO. The polypeptide is Recombination protein RecR (Desulforapulum autotrophicum (strain ATCC 43914 / DSM 3382 / VKM B-1955 / HRM2) (Desulfobacterium autotrophicum)).